A 256-amino-acid polypeptide reads, in one-letter code: Imidazole glycerol phosphate synthase subunit HisF (256 aa).

Active-site residues include aspartate 11 and aspartate 130.

The protein belongs to the HisA/HisF family. As to quaternary structure, heterodimer of HisH and HisF.

Its subcellular location is the cytoplasm. The enzyme catalyses 5-[(5-phospho-1-deoxy-D-ribulos-1-ylimino)methylamino]-1-(5-phospho-beta-D-ribosyl)imidazole-4-carboxamide + L-glutamine = D-erythro-1-(imidazol-4-yl)glycerol 3-phosphate + 5-amino-1-(5-phospho-beta-D-ribosyl)imidazole-4-carboxamide + L-glutamate + H(+). It participates in amino-acid biosynthesis; L-histidine biosynthesis; L-histidine from 5-phospho-alpha-D-ribose 1-diphosphate: step 5/9. IGPS catalyzes the conversion of PRFAR and glutamine to IGP, AICAR and glutamate. The HisF subunit catalyzes the cyclization activity that produces IGP and AICAR from PRFAR using the ammonia provided by the HisH subunit. This is Imidazole glycerol phosphate synthase subunit HisF from Synechococcus sp. (strain CC9605).